The primary structure comprises 32 residues: Cytochrome b6-f complex subunit 7 (32 aa).

The helical transmembrane segment at 5-25 (IFGTAAIFWVLIPAGLLGGAL) threads the bilayer.

It belongs to the PetM family. In terms of assembly, the 4 large subunits of the cytochrome b6-f complex are cytochrome b6, subunit IV (17 kDa polypeptide, PetD), cytochrome f and the Rieske protein, while the 4 small subunits are PetG, PetL, PetM and PetN. The complex functions as a dimer.

It is found in the cellular thylakoid membrane. Its function is as follows. Component of the cytochrome b6-f complex, which mediates electron transfer between photosystem II (PSII) and photosystem I (PSI), cyclic electron flow around PSI, and state transitions. In Prochlorococcus marinus (strain SARG / CCMP1375 / SS120), this protein is Cytochrome b6-f complex subunit 7.